Consider the following 325-residue polypeptide: 5-dehydro-2-deoxygluconokinase (325 aa).

The protein belongs to the carbohydrate kinase PfkB family.

It catalyses the reaction 5-dehydro-2-deoxy-D-gluconate + ATP = 6-phospho-5-dehydro-2-deoxy-D-gluconate + ADP + H(+). It participates in polyol metabolism; myo-inositol degradation into acetyl-CoA; acetyl-CoA from myo-inositol: step 5/7. Its function is as follows. Catalyzes the phosphorylation of 5-dehydro-2-deoxy-D-gluconate (2-deoxy-5-keto-D-gluconate or DKG) to 6-phospho-5-dehydro-2-deoxy-D-gluconate (DKGP). The polypeptide is 5-dehydro-2-deoxygluconokinase (Listeria monocytogenes serotype 4b (strain CLIP80459)).